A 146-amino-acid chain; its full sequence is Large ribosomal subunit protein uL15 (146 aa).

Positions 1–54 (MKLHELQPAAGSRKAPKRVGRGTGSGLGRNAGKGEKGQNARSGGGVRPGFEGGQ) are disordered. 2 stretches are compositionally biased toward gly residues: residues 21–31 (RGTGSGLGRNA) and 42–52 (SGGGVRPGFEG).

It belongs to the universal ribosomal protein uL15 family. In terms of assembly, part of the 50S ribosomal subunit.

Its function is as follows. Binds to the 23S rRNA. The polypeptide is Large ribosomal subunit protein uL15 (Clostridium botulinum (strain Alaska E43 / Type E3)).